The sequence spans 218 residues: Adenylate kinase (218 aa).

An ATP-binding site is contributed by 10–15 (GAGKGT). Residues 30–59 (STGDMLRAAVKAGTPLGVEAKKIMDAGALV) form an NMP region. AMP is bound by residues Thr31, Arg36, 57–59 (ALV), 85–88 (GFPR), and Gln92. The segment at 122–159 (GRRSHTASGRTYHVKYNPPKVEGKDDVTGEPLIQREDD) is LID. Residues Arg123 and 132-133 (TY) each bind ATP. AMP-binding residues include Arg156 and Arg167. Gly203 contributes to the ATP binding site.

This sequence belongs to the adenylate kinase family. Monomer.

The protein resides in the cytoplasm. It carries out the reaction AMP + ATP = 2 ADP. It participates in purine metabolism; AMP biosynthesis via salvage pathway; AMP from ADP: step 1/1. Catalyzes the reversible transfer of the terminal phosphate group between ATP and AMP. Plays an important role in cellular energy homeostasis and in adenine nucleotide metabolism. The polypeptide is Adenylate kinase (Polaromonas sp. (strain JS666 / ATCC BAA-500)).